We begin with the raw amino-acid sequence, 150 residues long: Transcription antitermination protein NusB (150 aa).

Belongs to the NusB family.

In terms of biological role, involved in transcription antitermination. Required for transcription of ribosomal RNA (rRNA) genes. Binds specifically to the boxA antiterminator sequence of the ribosomal RNA (rrn) operons. The polypeptide is Transcription antitermination protein NusB (Streptococcus pyogenes serotype M2 (strain MGAS10270)).